The following is a 355-amino-acid chain: Putative testis-specific Y-encoded-like protein 3 (355 aa).

The tract at residues 1-131 (MADKRAGTPE…GEEKQEVAAE (131 aa)) is disordered. Basic and acidic residues predominate over residues 93–128 (ASEKAEDANKEEGAIFKKEPAEEVEKQQEGEEKQEV).

It belongs to the nucleosome assembly protein (NAP) family.

The polypeptide is Putative testis-specific Y-encoded-like protein 3 (TSPY26P) (Homo sapiens (Human)).